We begin with the raw amino-acid sequence, 84 residues long: Perlustrin (84 aa).

The 82-residue stretch at 1 to 82 (LSCASCENAA…LDFKGVCARV (82 aa)) folds into the IGFBP N-terminal domain. 6 disulfide bridges follow: cysteine 3–cysteine 28, cysteine 6–cysteine 30, cysteine 11–cysteine 31, cysteine 18–cysteine 34, cysteine 42–cysteine 55, and cysteine 49–cysteine 79.

As to expression, shell.

Its function is as follows. Binds human IGF1 and IGF2 and bovine insulin. The polypeptide is Perlustrin (Haliotis laevigata (Smooth Australian abalone)).